A 424-amino-acid chain; its full sequence is Splicing factor 3B subunit 4 (424 aa).

Position 2 is an N-acetylalanine (Ala2). 2 RRM domains span residues 13 to 91 (ATVY…KASA) and 100 to 179 (ANIF…YAFK). Phosphotyrosine is present on Tyr56. Residues 207–424 (PHQLFADAPP…RGPLRGPLPQ (218 aa)) form a disordered region. Residues 222 to 231 (NPVVSSLGSG) are compositionally biased toward low complexity. Over residues 232-268 (LPPPGMPPPGSFPPPVPPPGALPPGIPPAMPPPPMPP) the composition is skewed to pro residues. Low complexity-rich tracts occupy residues 269-280 (GAAGHGPPSAGT) and 303-323 (HPGMSQMQLAHHGPHGLGHPH). Composition is skewed to pro residues over residues 332–381 (QPPP…PLMP) and 388–424 (PPRPPPYGYQRGPLPPPRPTPRPPVPPRGPLRGPLPQ).

The protein belongs to the SF3B4 family. In terms of assembly, component of the 17S U2 SnRNP complex, a ribonucleoprotein complex that contains small nuclear RNA (snRNA) U2 and a number of specific proteins. Part of the SF3B subcomplex of the 17S U2 SnRNP complex. SF3B associates with the splicing subcomplex SF3A and a 12S RNA unit to form the U2 small nuclear ribonucleoproteins complex (U2 snRNP). SF3B4 has been found in complex spliceosome 'B' and 'C' as well. Component of the minor (U12-type spliceosome) spliceosome. Found in a complex with PRMT9, SF3B2 and SF3B4.

The protein resides in the nucleus. Its function is as follows. Component of the 17S U2 SnRNP complex of the spliceosome, a large ribonucleoprotein complex that removes introns from transcribed pre-mRNAs. The 17S U2 SnRNP complex (1) directly participates in early spliceosome assembly and (2) mediates recognition of the intron branch site during pre-mRNA splicing by promoting the selection of the pre-mRNA branch-site adenosine, the nucleophile for the first step of splicing. Within the 17S U2 SnRNP complex, SF3B4 is part of the SF3B subcomplex, which is required for 'A' complex assembly formed by the stable binding of U2 snRNP to the branchpoint sequence in pre-mRNA. Sequence independent binding of SF3A and SF3B subcomplexes upstream of the branch site is essential, it may anchor U2 snRNP to the pre-mRNA. May also be involved in the assembly of the 'E' complex. Also acts as a component of the minor spliceosome, which is involved in the splicing of U12-type introns in pre-mRNAs. The chain is Splicing factor 3B subunit 4 (SF3B4) from Homo sapiens (Human).